The chain runs to 66 residues: Large ribosomal subunit protein bL32 (66 aa).

This sequence belongs to the bacterial ribosomal protein bL32 family.

The sequence is that of Large ribosomal subunit protein bL32 from Rickettsia akari (strain Hartford).